The primary structure comprises 258 residues: Snake venom serine protease 2 (258 aa).

The N-terminal stretch at 1–18 (MVLIRVLANLLILQLSYA) is a signal peptide. A propeptide spanning residues 19–24 (QKSSEL) is cleaved from the precursor. In terms of domain architecture, Peptidase S1 spans 25–249 (VFGGRPCNIN…YNDWVQSIIA (225 aa)). Cystine bridges form between Cys-31–Cys-163, Cys-50–Cys-66, Cys-98–Cys-256, Cys-142–Cys-210, Cys-174–Cys-189, and Cys-200–Cys-225. Asn-44 carries N-linked (GlcNAc...) asparagine glycosylation. Residues His-65 and Asp-110 each act as charge relay system in the active site. 2 N-linked (GlcNAc...) asparagine glycosylation sites follow: Asn-122 and Asn-185. Ser-204 acts as the Charge relay system in catalysis.

The protein belongs to the peptidase S1 family. Snake venom subfamily. As to quaternary structure, monomer. As to expression, expressed by the venom gland.

The protein localises to the secreted. Its activity is regulated as follows. Inhibited by PMSF at 2 mM concentration but not by EDTA. Snake venom serine protease that may act in the hemostasis system of the prey. Has weak fibrinogen clotting activity. Possesses amidolysis activity towards S-2251 (substrate for plasmin) but has no hydrolytic activity with S-2302 (plasma kallikrein substrate) or S-2238 (thrombin substrate). In Protobothrops jerdonii (Jerdon's pitviper), this protein is Snake venom serine protease 2.